The primary structure comprises 363 residues: Melanoma-associated antigen B16 (363 aa).

Residues Glu33 to Pro124 form a disordered region. The span at Ala82–Glu97 shows a compositional bias: low complexity. One can recognise an MAGE domain in the interval Val128–Ala327. The interval His342–Val363 is disordered.

The sequence is that of Melanoma-associated antigen B16 (Mageb16) from Mus musculus (Mouse).